Reading from the N-terminus, the 723-residue chain is Peroxisomal bifunctional enzyme (723 aa).

The enoyl-CoA hydratase / isomerase stretch occupies residues 1–282 (MAEYTRLHNA…FAERKANKWS (282 aa)). Position 38 is an N6-succinyllysine (Lys-38). Residue Gly-101 participates in substrate binding. Position 165 is an N6-acetyllysine; alternate (Lys-165). The residue at position 165 (Lys-165) is an N6-succinyllysine; alternate. Lys-171 is modified (N6-acetyllysine). Lys-219 is modified (N6-acetyllysine; alternate). N6-succinyllysine; alternate is present on Lys-219. Position 250 is an N6-acetyllysine (Lys-250). N6-succinyllysine is present on residues Lys-280 and Lys-290. Residues 283-572 (TPSGASWKTA…DVLCELGRFG (290 aa)) form a 3-hydroxyacyl-CoA dehydrogenase region. 3 positions are modified to N6-acetyllysine: Lys-346, Lys-350, and Lys-464. Lys-532 is subject to N6-succinyllysine. Thr-548 carries the phosphothreonine modification. Lys-577 is subject to N6-succinyllysine. N6-acetyllysine; alternate is present on residues Lys-584, Lys-591, and Lys-710. Lys-584, Lys-591, and Lys-710 each carry N6-succinyllysine; alternate. Phosphoserine is present on Ser-718. The short motif at 721–723 (SKL) is the Microbody targeting signal element. At Lys-722 the chain carries N6-succinyllysine.

In the N-terminal section; belongs to the enoyl-CoA hydratase/isomerase family. The protein in the C-terminal section; belongs to the 3-hydroxyacyl-CoA dehydrogenase family. In terms of assembly, monomer. Acetylated, leading to enhanced enzyme activity. Acetylation is enhanced by up to 80% after treatment either with trichostin A (TSA) or with nicotinamide (NAM) with highest increase on Lys-346. Acetylation and enzyme activity increased by about 1.5% on addition of fatty acids. Liver and kidney. Strongly expressed in the terminal segments of the proximal tubule. Lower amounts seen in the brain.

Its subcellular location is the peroxisome. The enzyme catalyses a (3S)-3-hydroxyacyl-CoA = a (2E)-enoyl-CoA + H2O. It catalyses the reaction a 4-saturated-(3S)-3-hydroxyacyl-CoA = a (3E)-enoyl-CoA + H2O. It carries out the reaction a (3Z)-enoyl-CoA = a 4-saturated (2E)-enoyl-CoA. The catalysed reaction is a (3E)-enoyl-CoA = a 4-saturated (2E)-enoyl-CoA. The enzyme catalyses a (3S)-3-hydroxyacyl-CoA + NAD(+) = a 3-oxoacyl-CoA + NADH + H(+). It catalyses the reaction (2S,3S)-3-hydroxy-2-methylbutanoyl-CoA = (2E)-2-methylbut-2-enoyl-CoA + H2O. It carries out the reaction (3S)-hydroxyhexadecanoyl-CoA + NAD(+) = 3-oxohexadecanoyl-CoA + NADH + H(+). The catalysed reaction is (3S)-hydroxyhexadecanoyl-CoA = (2E)-hexadecenoyl-CoA + H2O. The enzyme catalyses (2E)-hexadecenedioyl-CoA + H2O = (3S)-hydroxyhexadecanedioyl-CoA. It catalyses the reaction (3S)-hydroxyhexadecanedioyl-CoA + NAD(+) = 3-oxohexadecanedioyl-CoA + NADH + H(+). It carries out the reaction (3E,5Z)-tetradecadienoyl-CoA = (2E,5Z)-tetradecadienoyl-CoA. The catalysed reaction is (3E,5Z)-octadienoyl-CoA = (2E,5Z)-octadienoyl-CoA. The enzyme catalyses (3S)-hydroxydecanoyl-CoA + NAD(+) = 3-oxodecanoyl-CoA + NADH + H(+). It catalyses the reaction (3E)-decenoyl-CoA = (2E)-decenoyl-CoA. It carries out the reaction (3Z)-hexenoyl-CoA = (2E)-hexenoyl-CoA. The catalysed reaction is (3E)-hexenoyl-CoA = (2E)-hexenoyl-CoA. The enzyme catalyses (3S)-hydroxydecanoyl-CoA = (2E)-decenoyl-CoA + H2O. It catalyses the reaction (3S)-hydroxyhexanoyl-CoA = (2E)-hexenoyl-CoA + H2O. It functions in the pathway lipid metabolism; fatty acid beta-oxidation. Its activity is regulated as follows. Enzyme activity enhanced by acetylation. In terms of biological role, peroxisomal trifunctional enzyme possessing 2-enoyl-CoA hydratase, 3-hydroxyacyl-CoA dehydrogenase, and delta 3, delta 2-enoyl-CoA isomerase activities. Catalyzes two of the four reactions of the long chain fatty acids peroxisomal beta-oxidation pathway. Can also use branched-chain fatty acids such as 2-methyl-2E-butenoyl-CoA as a substrate, which is hydrated into (2S,3S)-3-hydroxy-2-methylbutanoyl-CoA. Optimal isomerase for 2,5 double bonds into 3,5 form isomerization in a range of enoyl-CoA species. Also able to isomerize both 3-cis and 3-trans double bonds into the 2-trans form in a range of enoyl-CoA species. With HSD17B4, catalyzes the hydration of trans-2-enoyl-CoA and the dehydrogenation of 3-hydroxyacyl-CoA, but with opposite chiral specificity. Regulates the amount of medium-chain dicarboxylic fatty acids which are essential regulators of all fatty acid oxidation pathways. Also involved in the degradation of long-chain dicarboxylic acids through peroxisomal beta-oxidation. The chain is Peroxisomal bifunctional enzyme from Homo sapiens (Human).